An 817-amino-acid polypeptide reads, in one-letter code: Transcription factor yanR (817 aa).

The segment at residues 19–46 (CIVCRRRKVRCGREHPECANCVRMKENC) is a DNA-binding region (zn(2)-C6 fungal-type). Disordered regions lie at residues 102-161 (GNVL…PQVD), 180-218 (HHAS…YSGL), and 733-775 (SLSS…VADS). Pro residues predominate over residues 113–127 (LPRPTISPASAPPPQ). Residues 146–158 (SSTILTPAPSSHP) show a composition bias toward polar residues. Over residues 184 to 195 (SRAGTSRTSSVS) the composition is skewed to low complexity. Composition is skewed to polar residues over residues 208-217 (APSTSTSYSG) and 748-760 (EAPS…QMPS).

Its subcellular location is the nucleus. Transcription factor that regulates the expression of the gene cluster that mediates the biosynthesis of yanuthone D, a fungal isoprenoid epoxycyclohexenone that acts as an antibiotic against fungi and bacteria. This chain is Transcription factor yanR, found in Aspergillus niger (strain ATCC 1015 / CBS 113.46 / FGSC A1144 / LSHB Ac4 / NCTC 3858a / NRRL 328 / USDA 3528.7).